Here is a 64-residue protein sequence, read N- to C-terminus: Large ribosomal subunit protein uL29 (64 aa).

Belongs to the universal ribosomal protein uL29 family.

This Polynucleobacter necessarius subsp. necessarius (strain STIR1) protein is Large ribosomal subunit protein uL29.